Reading from the N-terminus, the 168-residue chain is Acetolactate synthase small subunit (168 aa).

The region spanning 7–82 (TLSVLVEDKP…VIKIVEQDDE (76 aa)) is the ACT domain.

This sequence belongs to the acetolactate synthase small subunit family. In terms of assembly, dimer of large and small chains.

The catalysed reaction is 2 pyruvate + H(+) = (2S)-2-acetolactate + CO2. It participates in amino-acid biosynthesis; L-isoleucine biosynthesis; L-isoleucine from 2-oxobutanoate: step 1/4. Its pathway is amino-acid biosynthesis; L-valine biosynthesis; L-valine from pyruvate: step 1/4. This chain is Acetolactate synthase small subunit (ilvH), found in Mycobacterium bovis (strain ATCC BAA-935 / AF2122/97).